The chain runs to 151 residues: Lipoprotein signal peptidase (151 aa).

2 helical membrane-spanning segments follow: residues Gly54–Ile74 and Leu83–Leu103. Active-site residues include Asp110 and Asp125. Residues Ile120–Leu140 form a helical membrane-spanning segment.

The protein belongs to the peptidase A8 family.

The protein resides in the cell membrane. The enzyme catalyses Release of signal peptides from bacterial membrane prolipoproteins. Hydrolyzes -Xaa-Yaa-Zaa-|-(S,diacylglyceryl)Cys-, in which Xaa is hydrophobic (preferably Leu), and Yaa (Ala or Ser) and Zaa (Gly or Ala) have small, neutral side chains.. Its pathway is protein modification; lipoprotein biosynthesis (signal peptide cleavage). In terms of biological role, this protein specifically catalyzes the removal of signal peptides from prolipoproteins. The chain is Lipoprotein signal peptidase from Shouchella clausii (strain KSM-K16) (Alkalihalobacillus clausii).